The following is a 462-amino-acid chain: Tryptophan dimethylallyltransferase ifgA (462 aa).

L-tryptophan contacts are provided by residues 83–84 (IL) and Glu-92. Substrate is bound by residues Arg-103, Lys-189, and Tyr-191. The L-tryptophan site is built by Tyr-193 and Arg-246. The substrate site is built by Arg-259, Lys-261, Tyr-263, Gln-345, and Tyr-347.

The protein belongs to the tryptophan dimethylallyltransferase family. In terms of assembly, homodimer.

The enzyme catalyses L-tryptophan + dimethylallyl diphosphate = 4-(3-methylbut-2-enyl)-L-tryptophan + diphosphate. It functions in the pathway alkaloid biosynthesis; ergot alkaloid biosynthesis. Functionally, tryptophan dimethylallyltransferase; part of the gene cluster that mediates the biosynthesis of isofumigaclavines, fungal ergot alkaloids. The tryptophan dimethylallyltransferase ifgA catalyzes the first step of ergot alkaloid biosynthesis by condensing dimethylallyl diphosphate (DMAP) and tryptophan to form 4-dimethylallyl-L-tryptophan. The second step is catalyzed by the methyltransferase ifgB that methylates 4-dimethylallyl-L-tryptophan in the presence of S-adenosyl-L-methionine, resulting in the formation of N-methyl-dimethylallyl-L-tryptophan. The catalase ifgD and the FAD-dependent oxidoreductase ifgC then transform N-methyl-dimethylallyl-L-tryptophan to chanoclavine-I which is further oxidized by ifgE in the presence of NAD(+), resulting in the formation of chanoclavine-I aldehyde. The chanoclavine-I aldehyde reductases ifgG and/or fgaOx3 reduce chanoclavine-I aldehyde to dihydrochanoclavine-I aldehyde that spontaneously dehydrates to form 6,8-dimethyl-6,7-didehydroergoline. The festuclavine dehydrogenases ifgF1 and/or ifgF2 then catalyze the reduction of 6,8-dimethyl-6,7-didehydroergoline to form festuclavine. Hydrolysis of festuclavine by a yet undetermined cytochrome P450 monooxygenase (called ifgH) then leads to the formation of isofumigaclavine B which is in turn acetylated by ifgI to isofumigaclavine A. Penicillium roqueforti has interestingly at least two sets of genes for the consumption of chanoclavine-I aldehyde on three different loci, the OYEs ifgG/fgaOx3 and the festuclavine synthase homologs ifgF1/ifgF2. The reason for the duplication of these genes is unclear, probably to ensure the conversion of chanoclavine-I aldehyde by differential gene expression under various environmental conditions. The chain is Tryptophan dimethylallyltransferase ifgA from Penicillium roqueforti (strain FM164).